The chain runs to 713 residues: Probable muscarinic acetylcholine receptor gar-1 (713 aa).

The Extracellular segment spans residues 1 to 20 (MPNYTVPPDPADTSWDSPYS). An N-linked (GlcNAc...) asparagine glycan is attached at asparagine 3. A helical membrane pass occupies residues 21–41 (IPVQIVVWIIIIVLSLETIIG). Residues 42 to 66 (NAMVVMAYRIERNISKQVSNRYIVS) lie on the Cytoplasmic side of the membrane. Residues 67–87 (LAISDLIIGIEGFPFFTVYVL) form a helical membrane-spanning segment. At 88–101 (NGDRWPLGWVACQT) the chain is on the extracellular side. Cysteine 99 and cysteine 180 are disulfide-bonded. The helical transmembrane segment at 102-122 (WLFLDYTLCLVSILTVLLITA) threads the bilayer. The Cytoplasmic segment spans residues 123–144 (DRYLSVCHTAKYLKWQSPTKTQ). A helical transmembrane segment spans residues 145 to 165 (LLIVMSWLLPAIIFGIMIYGW). Over 166–189 (QAMTGQSTSMSGAECSAPFLSNPY) the chain is Extracellular. The chain crosses the membrane as a helical span at residues 190–210 (VNMGMYVAYYWTTLVAMLILY). Residues 211-633 (KGIHQAAKNL…QTKAEKRAHK (423 aa)) lie on the Cytoplasmic side of the membrane. Disordered regions lie at residues 256-350 (KEKA…SRRC), 381-403 (SRYSASESITTTHENDEKEVEKA), 427-475 (KNTD…KQAE), and 515-585 (LIRR…TDTF). Polar residues-rich tracts occupy residues 266–275 (SGYTSNQAGD) and 287–315 (PETSQFRVDPNSNNNLNVEGSLNTENDQN). 2 stretches are compositionally biased toward basic and acidic residues: residues 320–333 (EEERSGFLSRRESN) and 393–403 (HENDEKEVEKA). Residues 429–439 (TDSNNDSDTTS) are compositionally biased toward low complexity. The span at 444 to 457 (RSRKYKKNKRPRSS) shows a compositional bias: basic residues. Positions 557–571 (LTVNNENRGETSSQP) are enriched in polar residues. The helical transmembrane segment at 634–656 (AFRTITFIVGFFAILWSPYYIMA) threads the bilayer. At 657 to 670 (TVYGFCKGECIPSF) the chain is on the extracellular side. Residues 671–693 (LYTLSYYMCYLNSSGNPFAYALA) traverse the membrane as a helical segment. Residues 694–713 (NRQFRSAFMRMFRGNFNKVA) lie on the Cytoplasmic side of the membrane.

It belongs to the G-protein coupled receptor 1 family. Muscarinic acetylcholine receptor subfamily. Expressed in head region of the larva. In adults, expression is seen in the periventricularis magnocellularis (PVM) neuron.

The protein resides in the cell membrane. Its function is as follows. The muscarinic acetylcholine receptor mediates various cellular responses, including inhibition of adenylate cyclase, breakdown of phosphoinositides and modulation of potassium channels through the action of G proteins. Primary transducing effect is Pi turnover. The protein is Probable muscarinic acetylcholine receptor gar-1 (gar-1) of Caenorhabditis elegans.